The sequence spans 28 residues: Cruzioseptin-10 (28 aa).

Expressed by the skin glands.

It localises to the secreted. Its function is as follows. Has antimicrobial activity. This Cruziohyla calcarifer (Splendid leaf frog) protein is Cruzioseptin-10.